Here is a 36-residue protein sequence, read N- to C-terminus: Photosystem I reaction center subunit VIII (36 aa).

Residues 6–26 (LPSIFVPLVGLVFPAIAMASL) traverse the membrane as a helical segment.

It belongs to the PsaI family.

It is found in the plastid. The protein resides in the chloroplast thylakoid membrane. In terms of biological role, may help in the organization of the PsaL subunit. The sequence is that of Photosystem I reaction center subunit VIII from Liriodendron tulipifera (Tuliptree).